A 316-amino-acid polypeptide reads, in one-letter code: Olfactory receptor 5P79 (316 aa).

Topologically, residues 1–28 (MGILKDGNHTAVTEFILLGLTDDPVLKV) are extracellular. A glycan (N-linked (GlcNAc...) asparagine) is linked at asparagine 8. Residues 29-49 (VLFTIILCIYLVTVSGNLSTI) traverse the membrane as a helical segment. Residues 50–57 (LLIRVSSQ) are Cytoplasmic-facing. A helical membrane pass occupies residues 58-78 (LHHPMYFFLSHLASVDIGISS). Residues 79–102 (SVTPNMLVNFLLERSTISYLGCGI) are Extracellular-facing. A disulfide bond links cysteine 100 and cysteine 192. The chain crosses the membrane as a helical span at residues 103–123 (QLGSGAFFGSTESFLLAAMAY). The Cytoplasmic portion of the chain corresponds to 124 to 136 (DHFMAICNPLLYS). The helical transmembrane segment at 137–157 (TKMSTQVCIQLLVGSYIGGFL) threads the bilayer. The Extracellular portion of the chain corresponds to 158-199 (NASSFILSFFSFLFCGPNKVNHFFCDFTPLVELSCSDNSVLL). Residues 200–220 (ILDSFSAGSIIVITVLVIAIS) form a helical membrane-spanning segment. The Cytoplasmic portion of the chain corresponds to 221–240 (YTYILITILKMHSTEGRHKA). The helical transmembrane segment at 241–261 (FSTCTSHLTAVTVFYGTVTFI) threads the bilayer. At 262 to 274 (YVMPKSSYSTDQN) the chain is on the extracellular side. The helical transmembrane segment at 275–297 (KVLSVFYMIAIAIPMLNPLIYSL) threads the bilayer. Residues 298-316 (RNNEIKNALKRQLSKKTFS) lie on the Cytoplasmic side of the membrane.

The protein belongs to the G-protein coupled receptor 1 family.

It is found in the cell membrane. In terms of biological role, potential odorant receptor. The chain is Olfactory receptor 5P79 from Mus musculus (Mouse).